We begin with the raw amino-acid sequence, 91 residues long: Acylphosphatase (91 aa).

The region spanning 6–91 (CMRCYISGRV…WEDYISFDVL (86 aa)) is the Acylphosphatase-like domain. Residues Arg-21 and Asn-39 contribute to the active site.

This sequence belongs to the acylphosphatase family.

It carries out the reaction an acyl phosphate + H2O = a carboxylate + phosphate + H(+). The polypeptide is Acylphosphatase (acyP) (Legionella pneumophila subsp. pneumophila (strain Philadelphia 1 / ATCC 33152 / DSM 7513)).